The primary structure comprises 311 residues: Cytosolic Fe-S cluster assembly factor Nubp1 homolog (311 aa).

Residues C9, C23, C26, and C32 each contribute to the [4Fe-4S] cluster site. 63–70 (GKGGVGKS) is an ATP binding site. The [4Fe-4S] cluster site is built by C240 and C243.

The protein belongs to the Mrp/NBP35 ATP-binding proteins family. NUBP1/NBP35 subfamily. Heterotetramer of 2 Nubp1 and 2 Nubp2 chains. Requires [4Fe-4S] cluster as cofactor.

It is found in the cytoplasm. Functionally, component of the cytosolic iron-sulfur (Fe/S) protein assembly (CIA) machinery. Required for maturation of extramitochondrial Fe-S proteins. The Nubp1-Nubp2 heterotetramer forms a Fe-S scaffold complex, mediating the de novo assembly of an Fe-S cluster and its transfer to target apoproteins. This chain is Cytosolic Fe-S cluster assembly factor Nubp1 homolog, found in Drosophila erecta (Fruit fly).